Consider the following 4545-residue polypeptide: Prolow-density lipoprotein receptor-related protein 1 (4545 aa).

Positions 1–19 (MLTPPLLLLLPLLSALVAG) are cleaved as a signal peptide. The Extracellular portion of the chain corresponds to 20-4424 (ATMDAPKTCS…SQQQPGHMTS (4405 aa)). LDL-receptor class A domains lie at 27-66 (TCSP…EICP) and 72-110 (RCPP…AHCR). Cystine bridges form between cysteine 28–cysteine 41, cysteine 35–cysteine 54, cysteine 48–cysteine 65, cysteine 73–cysteine 86, cysteine 80–cysteine 99, and cysteine 93–cysteine 109. N-linked (GlcNAc...) asparagine glycosylation is found at asparagine 115, asparagine 137, asparagine 186, asparagine 240, and asparagine 275. LDL-receptor class B repeat units follow at residues 293–335 (GNFY…DPAM), 336–379 (GKVF…DLVS), and 380–423 (RLVY…FENY). Asparagine 358 is a glycosylation site (N-linked (GlcNAc...) asparagine). Asparagine 447 is a glycosylation site (N-linked (GlcNAc...) asparagine). LDL-receptor class B repeat units follow at residues 572-614 (GFIY…DWMG), 615-660 (DNLY…DPLN), 661-711 (GWMY…DIPA), and 712-755 (GRLY…HGNY). One copy of the HAT 1 repeat lies at 639 to 671 (TRKTLIEGKMTHPRAIVVDPLNGWMYWTDWEED). Residue asparagine 730 is glycosylated (N-linked (GlcNAc...) asparagine). 8 consecutive LDL-receptor class A domains span residues 854–892 (QCQP…ALCH), 895–933 (TCPS…ATCS), 936–973 (TCPP…ASCA), 976–1013 (TCFP…AGCS), 1015–1053 (SCSS…ANCT), 1062–1099 (GCHS…KGCE), 1104–1142 (VCDP…ENCE), and 1145–1184 (ACRP…ELCD). 24 cysteine pairs are disulfide-bonded: cysteine 855/cysteine 867, cysteine 862/cysteine 880, cysteine 874/cysteine 891, cysteine 896/cysteine 908, cysteine 903/cysteine 921, cysteine 915/cysteine 932, cysteine 937/cysteine 949, cysteine 944/cysteine 962, cysteine 956/cysteine 972, cysteine 977/cysteine 990, cysteine 985/cysteine 1003, cysteine 997/cysteine 1012, cysteine 1016/cysteine 1028, cysteine 1023/cysteine 1041, cysteine 1035/cysteine 1052, cysteine 1063/cysteine 1076, cysteine 1070/cysteine 1089, cysteine 1083/cysteine 1098, cysteine 1105/cysteine 1119, cysteine 1113/cysteine 1132, cysteine 1126/cysteine 1141, cysteine 1146/cysteine 1160, cysteine 1153/cysteine 1173, and cysteine 1167/cysteine 1183. Positions 872, 875, 877, 879, 885, and 886 each coordinate Ca(2+). The N-linked (GlcNAc...) asparagine glycan is linked to asparagine 929. 6 residues coordinate Ca(2+): tryptophan 1033, aspartate 1036, aspartate 1038, aspartate 1040, aspartate 1046, and glutamate 1047. Asparagine 1051 is a glycosylation site (N-linked (GlcNAc...) asparagine). Ca(2+)-binding residues include tryptophan 1081, aspartate 1084, aspartate 1086, aspartate 1088, aspartate 1094, and glutamate 1095. N-linked (GlcNAc...) asparagine glycosylation is present at asparagine 1156. N-linked (GlcNAc...) asparagine glycosylation is found at asparagine 1196 and asparagine 1219. LDL-receptor class B repeat units lie at residues 1310 to 1356 (SALY…DWIA), 1357 to 1399 (GNIY…DPRD), 1400 to 1446 (GILF…DYLE), 1447 to 1491 (KRIL…YGGE), and 1492 to 1532 (VYWT…YHPS). HAT repeat units follow at residues 1380-1413 (TTLL…SLPR) and 1470-1503 (MEVL…NTLA). 5 N-linked (GlcNAc...) asparagine glycosylation sites follow: asparagine 1512, asparagine 1559, asparagine 1576, asparagine 1617, and asparagine 1646. 4 LDL-receptor class B repeats span residues 1628–1670 (QRVY…DWVS), 1671–1714 (RNLF…HPLR), 1715–1754 (GKLY…DFPE), and 1755–1799 (SKLY…MGDK). The stretch at 1653–1684 (VVSADLPNAHGLAVDWVSRNLFWTSYDTNKKQ) is one HAT 4 repeat. Residues asparagine 1724, asparagine 1734, asparagine 1764, asparagine 1826, and asparagine 1934 are each glycosylated (N-linked (GlcNAc...) asparagine). 4 LDL-receptor class B repeats span residues 1935-1977 (DTIY…DWIA), 1978-2020 (GNIY…HPEK), 2021-2064 (GYLF…DYQG), and 2065-2108 (GKLY…FEDF). An N-linked (GlcNAc...) asparagine glycan is attached at asparagine 1996. Position 2010 is an N6-acetyllysine (lysine 2010). A glycan (N-linked (GlcNAc...) asparagine) is linked at asparagine 2049. 2 N-linked (GlcNAc...) asparagine glycosylation sites follow: asparagine 2118 and asparagine 2128. LDL-receptor class B repeat units lie at residues 2254 to 2295 (NRIF…HRGW), 2296 to 2344 (DTLY…DECQ), 2345 to 2389 (NLMF…DHRA), 2390 to 2432 (EKLY…YGEH), and 2433 to 2474 (IFWT…VAND). HAT repeat units lie at residues 2277–2309 (TTIV…STIT), 2325–2358 (TVIT…LHPS), and 2411–2444 (HRYV…RAVQ). 3 N-linked (GlcNAc...) asparagine glycosylation sites follow: asparagine 2473, asparagine 2503, and asparagine 2522. LDL-receptor class A domains follow at residues 2524–2563 (SCRA…SYCN), 2566–2602 (RCKK…IPCN), 2605–2641 (ACGV…MNCS), 2639–2690 (NCSA…RDCP), 2696–2732 (RCPL…THCN), 2734–2771 (FCSE…AHCE), and 2774–2814 (TCGP…AGCL). 6 cysteine pairs are disulfide-bonded: cysteine 2525/cysteine 2538, cysteine 2533/cysteine 2551, cysteine 2545/cysteine 2562, cysteine 2567/cysteine 2579, cysteine 2574/cysteine 2592, and cysteine 2586/cysteine 2601. An N-linked (GlcNAc...) asparagine glycan is attached at asparagine 2602. Disulfide bonds link cysteine 2606/cysteine 2618, cysteine 2613/cysteine 2631, cysteine 2625/cysteine 2640, cysteine 2640/cysteine 2667, cysteine 2645/cysteine 2680, cysteine 2674/cysteine 2689, cysteine 2697/cysteine 2709, cysteine 2704/cysteine 2722, cysteine 2716/cysteine 2731, cysteine 2735/cysteine 2747, cysteine 2742/cysteine 2760, cysteine 2754/cysteine 2770, cysteine 2775/cysteine 2788, cysteine 2782/cysteine 2801, and cysteine 2795/cysteine 2813. N-linked (GlcNAc...) asparagine glycosylation is found at asparagine 2621 and asparagine 2639. N-linked (GlcNAc...) asparagine glycosylation is present at asparagine 2816. 3 consecutive LDL-receptor class A domains span residues 2818 to 2855 (TCDD…PECE), 2858 to 2899 (TCGP…PHCT), and 2904 to 2941 (KCNA…RGCH). Cystine bridges form between cysteine 2819/cysteine 2831, cysteine 2826/cysteine 2844, cysteine 2838/cysteine 2854, cysteine 2859/cysteine 2871, cysteine 2866/cysteine 2885, cysteine 2879/cysteine 2898, cysteine 2905/cysteine 2918, cysteine 2913/cysteine 2931, cysteine 2925/cysteine 2940, cysteine 2987/cysteine 2997, and cysteine 2993/cysteine 3006. Asparagine 2906 is a glycosylation site (N-linked (GlcNAc...) asparagine). Residues 2983–3018 (DVDECSTTFPCSQLCINTHGSYKCLCVEGYAPRGGD) enclose the EGF-like 1; calcium-binding domain. Asparagine 3049 and asparagine 3090 each carry an N-linked (GlcNAc...) asparagine glycan. LDL-receptor class B repeat units lie at residues 3070–3114 (QMIY…DWVG), 3115–3157 (GNLY…DVQN), 3158–3201 (GYLY…DYVT), 3202–3244 (ERIY…FEDY), and 3245–3285 (VYWT…FHAL). 2 HAT repeats span residues 3128-3171 (EVSK…HSLI) and 3224-3256 (RHVV…KSIN). 2 N-linked (GlcNAc...) asparagine glycosylation sites follow: asparagine 3265 and asparagine 3334. LDL-receptor class A domains lie at 3334 to 3371 (NCTA…PDCP), 3374 to 3410 (KCRP…ANCD), 3413 to 3450 (VCLP…RDCP), 3453 to 3491 (TCAP…ANCT), 3494 to 3533 (TCGV…EECD), 3536 to 3572 (TCEP…ESCT), 3575 to 3611 (PCSE…KDCT), 3613 to 3649 (RCDM…EACG), 3654 to 3692 (TCPL…EECT), 3695 to 3733 (QCPP…EDCE), and 3741 to 3778 (HCKD…EDCS). Intrachain disulfides connect cysteine 3335–cysteine 3347, cysteine 3342–cysteine 3360, cysteine 3354–cysteine 3370, cysteine 3375–cysteine 3387, cysteine 3382–cysteine 3400, cysteine 3394–cysteine 3409, cysteine 3414–cysteine 3427, cysteine 3421–cysteine 3440, cysteine 3434–cysteine 3449, cysteine 3454–cysteine 3467, cysteine 3461–cysteine 3480, cysteine 3474–cysteine 3490, cysteine 3495–cysteine 3508, cysteine 3502–cysteine 3521, cysteine 3515–cysteine 3532, cysteine 3537–cysteine 3549, cysteine 3544–cysteine 3562, cysteine 3556–cysteine 3571, cysteine 3576–cysteine 3588, cysteine 3583–cysteine 3601, cysteine 3595–cysteine 3610, cysteine 3614–cysteine 3626, cysteine 3621–cysteine 3639, cysteine 3633–cysteine 3648, cysteine 3655–cysteine 3667, cysteine 3662–cysteine 3680, cysteine 3674–cysteine 3691, cysteine 3696–cysteine 3710, cysteine 3704–cysteine 3723, cysteine 3717–cysteine 3732, cysteine 3742–cysteine 3755, cysteine 3750–cysteine 3768, and cysteine 3762–cysteine 3777. N-linked (GlcNAc...) asparagine glycosylation is present at asparagine 3489. N-linked (GlcNAc...) asparagine glycosylation is present at asparagine 3663. N-linked (GlcNAc...) asparagine glycans are attached at residues asparagine 3789 and asparagine 3840. An LDL-receptor class B 31 repeat occupies 3913-3925 (GRVYWTNWHTGTI). Asparagine 3954 carries an N-linked (GlcNAc...) asparagine glycan. LDL-receptor class B repeat units lie at residues 3971-4013 (GNVY…DPLR), 4014-4057 (GTMY…DYHN), and 4058-4102 (ERLY…FEDY). Residues 3995–4027 (TLISGMIDEPHAIVVDPLRGTMYWSDWGNHPKI) form an HAT 10 repeat. 3 N-linked (GlcNAc...) asparagine glycosylation sites follow: asparagine 4076, asparagine 4126, and asparagine 4180. 4 EGF-like domains span residues 4197–4230 (RPGT…YTGD), 4233–4269 (ELDQ…PRCT), 4270–4302 (QQVC…FLGD), and 4305–4341 (QYRQ…TRCE). Cystine bridges form between cysteine 4201-cysteine 4211, cysteine 4205-cysteine 4221, cysteine 4237-cysteine 4247, cysteine 4241-cysteine 4257, cysteine 4259-cysteine 4268, cysteine 4273-cysteine 4283, cysteine 4277-cysteine 4293, cysteine 4309-cysteine 4319, cysteine 4313-cysteine 4329, and cysteine 4331-cysteine 4340. N-linked (GlcNAc...) asparagine glycosylation is present at asparagine 4280. N-linked (GlcNAc...) asparagine glycosylation occurs at asparagine 4365. The EGF-like 6 domain maps to 4376–4410 (LTCIDHCSNGGSCTMNSKMMPECQCPPHMTGPRCE). 3 disulfides stabilise this stretch: cysteine 4378/cysteine 4388, cysteine 4382/cysteine 4398, and cysteine 4400/cysteine 4409. Residues 4425–4445 (ILIPLLLLLLLLLVAGVVFWY) form a helical membrane-spanning segment. The Cytoplasmic segment spans residues 4446–4545 (KRRVRGAKGF…PEDEIGDPLA (100 aa)). Positions 4446–4545 (KRRVRGAKGF…PEDEIGDPLA (100 aa)) are interaction with MAFB. Residue threonine 4461 is modified to Phosphothreonine. Phosphotyrosine is present on tyrosine 4508. A phosphoserine mark is found at serine 4518, serine 4521, and serine 4524.

It belongs to the LDLR family. In terms of assembly, heterodimer of an 85-kDa membrane-bound carboxyl subunit and a non-covalently attached 515-kDa N-terminal subunit. Intracellular domain interacts with MAFB. Found in a complex with PID1/PCLI1, LRP1 and CUBNI. Interacts with SNX17, PID1/PCLI1, PDGF and CUBN. The intracellular domain interacts with SHC1, GULP1 and DAB1. Can weakly interact (via NPXY motif) with DAB2 (via PID domain); the interaction is enhanced by tyrosine phosphorylation of the NPXY motif. Interacts with MDK; promotes neuronal survival. Interacts with LRPAP1; this interaction is followed by rapid internalization. Interacts with uPA/PLAU and PAI1/SERPINE1, either individually or in complex with each other, leading to rapid endocytosis; this interaction is abolished in the presence of LRPAP1/RAP. Also interacts with tPA/PLAT alone or in complex with SERPINE1. Interacts with the urokinase receptor PLAUR; this interaction leads to PLAUR internalization and is impaired in the presence of SORL1. Interacts with PDGFB. Interacts with TAU/MAPT, leading to endocytosis; this interaction is reduced in the presence of LRPAP1/RAP. Interacts with IGFBP3. Interacts with ADGRG6. Post-translationally, cleaved into a 85 kDa membrane-spanning subunit (LRP-85) and a 515 kDa large extracellular domain (LRP-515) that remains non-covalently associated. Gamma-secretase-dependent cleavage of LRP-85 releases the intracellular domain from the membrane. In terms of processing, phosphorylated on serine and threonine residues. Phosphorylated on tyrosine residues upon stimulation with PDGF. Tyrosine phosphorylation promotes interaction with SHC1.

It localises to the cell membrane. Its subcellular location is the membrane. It is found in the coated pit. The protein localises to the golgi outpost. The protein resides in the cytoplasm. It localises to the cytoskeleton. Its subcellular location is the microtubule organizing center. It is found in the nucleus. Its function is as follows. Endocytic receptor involved in endocytosis and in phagocytosis of apoptotic cells. Required for early embryonic development. Involved in cellular lipid homeostasis. Involved in the plasma clearance of chylomicron remnants and activated LRPAP1 (alpha 2-macroglobulin), as well as the local metabolism of complexes between plasminogen activators and their endogenous inhibitors. Acts as an LRPAP1 alpha-2-macroglobulin receptor. Acts as a TAU/MAPT receptor and controls the endocytosis of TAU/MAPT as well as its subsequent spread. May modulate cellular events, such as APP metabolism, kinase-dependent intracellular signaling, neuronal calcium signaling as well as neurotransmission. Also acts as a receptor for IGFBP3 to mediate cell growth inhibition. This is Prolow-density lipoprotein receptor-related protein 1 from Rattus norvegicus (Rat).